We begin with the raw amino-acid sequence, 491 residues long: Cyclin-B1-5 (491 aa).

In terms of domain architecture, Cyclin N-terminal spans 275-347 (DMYSFYKEVE…VKAVPKRELQ (73 aa)).

Belongs to the cyclin family. Cyclin AB subfamily. In terms of tissue distribution, expressed in roots, stems and flowers.

This chain is Cyclin-B1-5 (CYCB1-5), found in Arabidopsis thaliana (Mouse-ear cress).